A 600-amino-acid chain; its full sequence is Na(+)/dicarboxylate cotransporter 3 (600 aa).

The Cytoplasmic segment spans residues Met-1–Arg-16. The helical transmembrane segment at Leu-17 to Lys-37 threads the bilayer. Over Glu-38–Glu-55 the chain is Extracellular. The helical transmembrane segment at Ala-56–Leu-76 threads the bilayer. Residues Pro-77–Cys-82 are Cytoplasmic-facing. Residues Pro-83–Ile-103 traverse the membrane as a helical segment. The Extracellular segment spans residues Glu-104 to Phe-137. The helical transmembrane segment at Leu-138–Ile-158 threads the bilayer. The Cytoplasmic portion of the chain corresponds to Leu-159–Trp-229. The chain crosses the membrane as a helical span at residues Lys-230–Gly-250. At Thr-251–Ile-278 the chain is on the extracellular side. The chain crosses the membrane as a helical span at residues Phe-279–Tyr-299. The Cytoplasmic portion of the chain corresponds to Gly-300–Ile-336. Residues Lys-337–Arg-357 form a helical membrane-spanning segment. At Asp-358 to Gly-372 the chain is on the extracellular side. A helical transmembrane segment spans residues Phe-373–Gln-393. The Cytoplasmic portion of the chain corresponds to Lys-394–Thr-422. Residues Val-423–Glu-443 constitute an intramembrane region (helical). The Cytoplasmic portion of the chain corresponds to Ser-444–Pro-461. Residues Pro-462–Asn-482 form a helical membrane-spanning segment. The Extracellular portion of the chain corresponds to Thr-483 to Leu-505. The helical transmembrane segment at Tyr-506–Pro-526 threads the bilayer. Residues Pro-527–Gly-546 lie on the Cytoplasmic side of the membrane. A helical transmembrane segment spans residues Leu-547–Thr-567. At Ile-568–Phe-600 the chain is on the extracellular side. Residues Asn-584 and Asn-594 are each glycosylated (N-linked (GlcNAc...) asparagine).

Belongs to the SLC13A/DASS transporter (TC 2.A.47) family. NADC subfamily. As to expression, highly expressed in kidney, and at much lower levels in brain.

It localises to the cell membrane. It carries out the reaction succinate(out) + 3 Na(+)(out) = succinate(in) + 3 Na(+)(in). The enzyme catalyses 2-oxoglutarate(out) + 3 Na(+)(out) = 2-oxoglutarate(in) + 3 Na(+)(in). The catalysed reaction is N-acetyl-L-aspartate(out) + 3 Na(+)(out) = N-acetyl-L-aspartate(in) + 3 Na(+)(in). It catalyses the reaction fumarate(out) + 3 Na(+)(out) = fumarate(in) + 3 Na(+)(in). It carries out the reaction glutarate(out) + 3 Na(+)(out) = glutarate(in) + 3 Na(+)(in). The enzyme catalyses 2,2-dimethylsuccinate(out) + 3 Na(+)(out) = 2,2-dimethylsuccinate(in) + 3 Na(+)(in). The catalysed reaction is 2,3-dimethylsuccinate(out) + 3 Na(+)(out) = 2,3-dimethylsuccinate(in) + 3 Na(+)(in). It catalyses the reaction malate(out) + 3 Na(+)(out) = malate(in) + 3 Na(+)(in). It carries out the reaction itaconate(out) + 3 Na(+)(out) = itaconate(in) + 3 Na(+)(in). In terms of biological role, high-affinity sodium-dicarboxylate cotransporter that accepts a range of substrates with 4-6 carbon atoms, such as the citric acid cycle intermediates succinate and alpha-ketoglutarate (2-oxoglutarate), as well as other compounds including N-acetyl-L-aspartate. Transports the dicarboxylate into the cell with a probable stoichiometry of 3 Na(+) for 1 divalent dicarboxylate, rendering the process electrogenic. Can transport citrate in a Na(+)-dependent manner, recognizing the divalent form of citrate rather than the trivalent form which is normally found in blood. Imports itaconate in hepatocytes leading to activation of TFEB-dependent lysosomal biogenesis involved in antibacterial innate immune response. The chain is Na(+)/dicarboxylate cotransporter 3 (Slc13a3) from Mus musculus (Mouse).